Consider the following 617-residue polypeptide: Dihydroxy-acid dehydratase (617 aa).

Aspartate 81 provides a ligand contact to Mg(2+). Cysteine 122 lines the [2Fe-2S] cluster pocket. Mg(2+)-binding residues include aspartate 123 and lysine 124. Lysine 124 carries the post-translational modification N6-carboxylysine. [2Fe-2S] cluster is bound at residue cysteine 195. Position 492 (glutamate 492) interacts with Mg(2+). Serine 518 (proton acceptor) is an active-site residue.

This sequence belongs to the IlvD/Edd family. In terms of assembly, homodimer. The cofactor is [2Fe-2S] cluster. Mg(2+) serves as cofactor.

The enzyme catalyses (2R)-2,3-dihydroxy-3-methylbutanoate = 3-methyl-2-oxobutanoate + H2O. It catalyses the reaction (2R,3R)-2,3-dihydroxy-3-methylpentanoate = (S)-3-methyl-2-oxopentanoate + H2O. It functions in the pathway amino-acid biosynthesis; L-isoleucine biosynthesis; L-isoleucine from 2-oxobutanoate: step 3/4. It participates in amino-acid biosynthesis; L-valine biosynthesis; L-valine from pyruvate: step 3/4. Its function is as follows. Functions in the biosynthesis of branched-chain amino acids. Catalyzes the dehydration of (2R,3R)-2,3-dihydroxy-3-methylpentanoate (2,3-dihydroxy-3-methylvalerate) into 2-oxo-3-methylpentanoate (2-oxo-3-methylvalerate) and of (2R)-2,3-dihydroxy-3-methylbutanoate (2,3-dihydroxyisovalerate) into 2-oxo-3-methylbutanoate (2-oxoisovalerate), the penultimate precursor to L-isoleucine and L-valine, respectively. This is Dihydroxy-acid dehydratase from Buchnera aphidicola subsp. Cinara cedri (strain Cc).